The sequence spans 200 residues: Dephospho-CoA kinase (200 aa).

A DPCK domain is found at 3-200 (RIGLTGGIGS…LIAEILSRVN (198 aa)). 11–16 (GSGKST) contributes to the ATP binding site.

It belongs to the CoaE family.

It localises to the cytoplasm. The catalysed reaction is 3'-dephospho-CoA + ATP = ADP + CoA + H(+). It functions in the pathway cofactor biosynthesis; coenzyme A biosynthesis; CoA from (R)-pantothenate: step 5/5. Catalyzes the phosphorylation of the 3'-hydroxyl group of dephosphocoenzyme A to form coenzyme A. The sequence is that of Dephospho-CoA kinase from Corynebacterium glutamicum (strain ATCC 13032 / DSM 20300 / JCM 1318 / BCRC 11384 / CCUG 27702 / LMG 3730 / NBRC 12168 / NCIMB 10025 / NRRL B-2784 / 534).